Reading from the N-terminus, the 106-residue chain is Transcription and mRNA export factor SUS1 (106 aa).

This sequence belongs to the ENY2 family. As to quaternary structure, component of the nuclear pore complex (NPC)-associated TREX-2 complex (transcription and export complex 2), composed of at least SUS1, SAC3, THP1, SEM1, and CDC31. TREX-2 contains 2 SUS1 chains. The TREX-2 complex interacts with the nucleoporin NUP1. Component of the 1.8 MDa SAGA transcription coactivator-HAT complex. SAGA is built of 5 distinct domains with specialized functions. Within the SAGA complex, SUS1, SGF11, SGF73 and UBP8 form an additional subcomplex of SAGA called the DUB module (deubiquitination module). Interacts directly with THP1, SAC3, SGF11, and with the RNA polymerase II.

It is found in the nucleus. The protein resides in the nucleoplasm. Its subcellular location is the cytoplasm. It localises to the P-body. Its function is as follows. Involved in mRNA export coupled transcription activation by association with both the TREX-2 and the SAGA complexes. At the promoters, SAGA is required for recruitment of the basal transcription machinery. It influences RNA polymerase II transcriptional activity through different activities such as TBP interaction and promoter selectivity, interaction with transcription activators, and chromatin modification through histone acetylation and deubiquitination. Within the SAGA complex, participates in a subcomplex required for deubiquitination of H2B and for the maintenance of steady-state H3 methylation levels. The TREX-2 complex functions in docking export-competent ribonucleoprotein particles (mRNPs) to the nuclear entrance of the nuclear pore complex (nuclear basket). TREX-2 participates in mRNA export and accurate chromatin positioning in the nucleus by tethering genes to the nuclear periphery. May also be involved in cytoplasmic mRNA decay by interaction with components of P-bodies. The polypeptide is Transcription and mRNA export factor SUS1 (Mycosarcoma maydis (Corn smut fungus)).